The sequence spans 644 residues: Chaperone protein DnaK (644 aa).

Phosphothreonine; by autocatalysis is present on Thr-200. A disordered region spans residues 603 to 644 (VMAAEQAKSGGAAPGAAPGGAQQAAPDADVVDADFKEVDDKK). The segment covering 612 to 630 (GGAAPGAAPGGAQQAAPDA) has biased composition (low complexity). A compositionally biased stretch (basic and acidic residues) spans 635-644 (ADFKEVDDKK).

This sequence belongs to the heat shock protein 70 family.

Functionally, acts as a chaperone. The chain is Chaperone protein DnaK from Polynucleobacter asymbioticus (strain DSM 18221 / CIP 109841 / QLW-P1DMWA-1) (Polynucleobacter necessarius subsp. asymbioticus).